Consider the following 79-residue polypeptide: Small integral membrane protein 40 (79 aa).

A helical membrane pass occupies residues 35–55 (FFIFLALFLTLLMLEAAYKLL).

It is found in the membrane. The protein is Small integral membrane protein 40 of Homo sapiens (Human).